Consider the following 802-residue polypeptide: Phenylalanine--tRNA ligase beta subunit (802 aa).

Positions 39–150 constitute a tRNA-binding domain; the sequence is AKALKPFTIA…ADAPIGAAYA (112 aa). The B5 domain occupies 400-475; it reads GDDRVIDFPV…RIYGVDKVPM (76 aa). Residues Asp453, Asp459, Glu462, and Glu463 each contribute to the Mg(2+) site. In terms of domain architecture, FDX-ACB spans 708–801; the sequence is SAFQPVSRDF…VTKKTGGTLR (94 aa).

The protein belongs to the phenylalanyl-tRNA synthetase beta subunit family. Type 1 subfamily. As to quaternary structure, tetramer of two alpha and two beta subunits. Mg(2+) is required as a cofactor.

It is found in the cytoplasm. The enzyme catalyses tRNA(Phe) + L-phenylalanine + ATP = L-phenylalanyl-tRNA(Phe) + AMP + diphosphate + H(+). The chain is Phenylalanine--tRNA ligase beta subunit from Bradyrhizobium diazoefficiens (strain JCM 10833 / BCRC 13528 / IAM 13628 / NBRC 14792 / USDA 110).